The following is a 385-amino-acid chain: S-adenosylmethionine synthase (385 aa).

ATP is bound at residue His16. Asp18 provides a ligand contact to Mg(2+). K(+) is bound at residue Glu44. L-methionine is bound by residues Glu57 and Gln100. Residues 100-110 form a flexible loop region; sequence QSPDINQGVDR. ATP is bound by residues 164-166, 230-231, Asp239, 245-246, Ala262, and Lys266; these read DGK, KF, and RK. Asp239 contributes to the L-methionine binding site. An L-methionine-binding site is contributed by Lys270.

It belongs to the AdoMet synthase family. Homotetramer; dimer of dimers. Requires Mg(2+) as cofactor. The cofactor is K(+).

The protein localises to the cytoplasm. The catalysed reaction is L-methionine + ATP + H2O = S-adenosyl-L-methionine + phosphate + diphosphate. Its pathway is amino-acid biosynthesis; S-adenosyl-L-methionine biosynthesis; S-adenosyl-L-methionine from L-methionine: step 1/1. Its function is as follows. Catalyzes the formation of S-adenosylmethionine (AdoMet) from methionine and ATP. The overall synthetic reaction is composed of two sequential steps, AdoMet formation and the subsequent tripolyphosphate hydrolysis which occurs prior to release of AdoMet from the enzyme. This Helicobacter pylori (strain Shi470) protein is S-adenosylmethionine synthase.